A 202-amino-acid chain; its full sequence is MTDALENLRQHLSDELGATLRTAHLDRGELTVELSREGFPAACLLLRDDVACAFDLLVDVCGVDYSAYGEGLWEGPRFAVVYHLLSLKHRQRLRVRIFADDDLPIVPSVVEVWAAANWFEREAFDLYGILFDGHPDLRRILTDYGFVGHPFRKDFPLVGTVEMRYDADQGRVVYEPTRTEERVVVPRIIREAGEGRYNARNQ.

It belongs to the complex I 30 kDa subunit family. NDH-1 is composed of 14 different subunits. Subunits NuoB, C, D, E, F, and G constitute the peripheral sector of the complex.

The protein localises to the cell inner membrane. The catalysed reaction is a quinone + NADH + 5 H(+)(in) = a quinol + NAD(+) + 4 H(+)(out). Its function is as follows. NDH-1 shuttles electrons from NADH, via FMN and iron-sulfur (Fe-S) centers, to quinones in the respiratory chain. The immediate electron acceptor for the enzyme in this species is believed to be ubiquinone. Couples the redox reaction to proton translocation (for every two electrons transferred, four hydrogen ions are translocated across the cytoplasmic membrane), and thus conserves the redox energy in a proton gradient. The chain is NADH-quinone oxidoreductase subunit C from Acidithiobacillus ferrooxidans (strain ATCC 23270 / DSM 14882 / CIP 104768 / NCIMB 8455) (Ferrobacillus ferrooxidans (strain ATCC 23270)).